We begin with the raw amino-acid sequence, 175 residues long: Regenerating islet-derived protein 3-alpha (175 aa).

The first 26 residues, 1 to 26 (MLPHLVLNSISWMLLSCLLFVFQVQG), serve as a signal peptide directing secretion. Residues 27 to 37 (EDFQKEVPSPR) constitute a propeptide that is removed on maturation. 3 cysteine pairs are disulfide-bonded: Cys-40–Cys-51, Cys-68–Cys-171, and Cys-146–Cys-163. A C-type lectin domain is found at 47–172 (YRSHCYALVM…CDGTLPFVCK (126 aa)). Residues His-50, His-107, Glu-121, and His-145 each coordinate Zn(2+). The tract at residues 103–118 (WIGLHDPTMGQQPNGG) is sufficient to activate EXTL3.

As to quaternary structure, forms a hexameric membrane-permeabilizing oligomeric pore on membrane phospholipids. The hexamer is formed by three dimers related by helical symmetry. Forms filaments, filamentation traps pore complexes and limits damage to host cells. Interacts with EXTL3. Post-translationally, proteolytic processing by trypsin removes an inhibitory N-terminal propeptide and is essential for peptidoglycan binding and antibacterial activity. As to expression, small intestine and pancreas.

It localises to the secreted. Its function is as follows. Bactericidal C-type lectin. The lack of the EPN motif may explain its inability to bind peptidoglycan. Functionally, acts as a hormone in response to different stimuli like anti-inflammatory signals, such as IL17A, or gut microbiome. Secreted by different cell types to activate its receptor EXTL3 and induce cell specific signaling pathways. Induced by IL17A in keratinocytes, regulates keratinocyte proliferation and differentiation after skin injury via activation of EXTL3-PI3K-AKT signaling pathway. In parallel, inhibits skin inflammation through the inhibition of inflammatory cytokines such as IL6 and TNF. In pancreas, is able to permealize beta-cells membrane and stimulate their proliferation. This Mus musculus (Mouse) protein is Regenerating islet-derived protein 3-alpha (Reg3a).